The primary structure comprises 361 residues: G2/mitotic-specific cyclin-B1 (361 aa).

The span at 1–13 (MLRATNNRRTSNN) shows a compositional bias: polar residues. The tract at residues 1 to 33 (MLRATNNRRTSNNVEKDSLQMAKHGNGPLKPVN) is disordered.

It belongs to the cyclin family. Cyclin AB subfamily. Interacts with the CDK1 protein kinase to form a serine/threonine kinase holoenzyme complex also known as maturation promoting factor (MPF). The cyclin subunit imparts substrate specificity to the complex. Interacts with E3 ubiquitin-protein ligase etc-1. Ubiquitinated by etc-1 likely during meiosis, resulting in its degradation.

It localises to the cytoplasm. Its function is as follows. Essential for the control of the cell cycle at the G2/M (mitosis) transition. This is G2/mitotic-specific cyclin-B1 (cyb-1) from Caenorhabditis elegans.